We begin with the raw amino-acid sequence, 267 residues long: MSKIFRKFAKTEFIFRFNIIDHNVILYSLYLDIIPMDSSNNYKKKYKKYKRKYIDLKKQLNYNQIHNFYFVHSTTNFSNLRDILKSGVIYPGKFLRPDQQKLSVNSEDVFANIYFEDINNLTHLQDFSILLHPKIIYDCGMFFNKGWQGGGKGDIIINATDSPVQIAHKLNEIREFLKNPILPEKIREFNPFLHHEAFFNHPISLNNGNLIGIICNHCDGSFNDYITGETHKESLKIINNIINDKLYNNVKIITRNYPIPKLNELLH.

Residues 37–62 are a coiled coil; the sequence is DSSNNYKKKYKKYKRKYIDLKKQLNY.

This is an uncharacterized protein from Acanthamoeba polyphaga (Amoeba).